We begin with the raw amino-acid sequence, 286 residues long: Aldo-keto reductase MAP_4149 (286 aa).

Tyr61 functions as the Proton donor in the catalytic mechanism. Leu201, Val203, Val239, Arg241, Ser242, Arg247, and Asn251 together coordinate NADPH.

Belongs to the aldo/keto reductase family.

This Mycolicibacterium paratuberculosis (strain ATCC BAA-968 / K-10) (Mycobacterium paratuberculosis) protein is Aldo-keto reductase MAP_4149.